Reading from the N-terminus, the 509-residue chain is Probable cytochrome P450 6a14 (509 aa).

Cys-454 lines the heme pocket.

This sequence belongs to the cytochrome P450 family. Heme serves as cofactor.

Its subcellular location is the endoplasmic reticulum membrane. The protein resides in the microsome membrane. Its function is as follows. May be involved in the metabolism of insect hormones and in the breakdown of synthetic insecticides. The chain is Probable cytochrome P450 6a14 (Cyp6a14) from Drosophila melanogaster (Fruit fly).